A 59-amino-acid polypeptide reads, in one-letter code: Light-harvesting protein B-800-850 alpha chain A (59 aa).

The Cytoplasmic portion of the chain corresponds to 1–11; that stretch reads MNQARIWTVVK. A helical transmembrane segment spans residues 12 to 35; the sequence is PTVGLPLLLGSVTVIAILVHFAVL. His-31 provides a ligand contact to a bacteriochlorophyll. Over 36 to 59 the chain is Periplasmic; the sequence is SHTTWFSKYWNGKAAAIESSVNVG.

The protein belongs to the antenna complex alpha subunit family. As to quaternary structure, the core complex is formed by different alpha and beta chains, binding bacteriochlorophyll molecules, and arranged most probably in tetrameric structures disposed around the reaction center. The non-pigmented gamma chains may constitute additional components.

The protein resides in the cell inner membrane. In terms of biological role, antenna complexes are light-harvesting systems, which transfer the excitation energy to the reaction centers. This Rhodopseudomonas palustris (strain ATCC BAA-98 / CGA009) protein is Light-harvesting protein B-800-850 alpha chain A (pucAA).